Consider the following 283-residue polypeptide: Release factor glutamine methyltransferase (283 aa).

S-adenosyl-L-methionine is bound by residues 120 to 124 (GTGSG), Asp-143, Phe-172, and Asn-187. 187–190 (NPPY) serves as a coordination point for substrate.

It belongs to the protein N5-glutamine methyltransferase family. PrmC subfamily.

It catalyses the reaction L-glutaminyl-[peptide chain release factor] + S-adenosyl-L-methionine = N(5)-methyl-L-glutaminyl-[peptide chain release factor] + S-adenosyl-L-homocysteine + H(+). Methylates the class 1 translation termination release factors RF1/PrfA and RF2/PrfB on the glutamine residue of the universally conserved GGQ motif. This Moorella thermoacetica (strain ATCC 39073 / JCM 9320) protein is Release factor glutamine methyltransferase.